A 284-amino-acid chain; its full sequence is Putative mitochondrial carrier protein PET8 (284 aa).

Solcar repeat units follow at residues 2-75 (NTFF…MKVK), 92-178 (IDTT…LKKT), and 192-271 (KGAI…VHSL). 6 consecutive transmembrane segments (helical) span residues 5 to 25 (FLSL…FFPI), 50 to 70 (GLGS…ISYD), 98 to 118 (MLSS…AEVV), 153 to 169 (GWST…CIQF), 194 to 214 (AICG…LDFL), and 252 to 272 (MWIS…HSLL).

The protein belongs to the mitochondrial carrier (TC 2.A.29) family.

Its subcellular location is the mitochondrion inner membrane. In Saccharomyces cerevisiae (strain ATCC 204508 / S288c) (Baker's yeast), this protein is Putative mitochondrial carrier protein PET8 (PET8).